The chain runs to 312 residues: Olfactory receptor 2M3 (312 aa).

Residues 1–25 (MARENSTFNSDFILLGIFNHSPTHT) lie on the Extracellular side of the membrane. Asparagine 5 carries an N-linked (GlcNAc...) asparagine glycan. The helical transmembrane segment at 26 to 49 (FLFFLVLAIFSVAFMGNSVMVLLI) threads the bilayer. The Cytoplasmic portion of the chain corresponds to 50-57 (YLDTQLHT). Residues 58-79 (PMYLLLSQLSLMDLMLICTTVP) traverse the membrane as a helical segment. Residues 80 to 100 (KMAFNYLSGSKSISMAGCATQ) are Extracellular-facing. An intrachain disulfide couples cysteine 97 to cysteine 189. The chain crosses the membrane as a helical span at residues 101-120 (IFFYTSLLGSECFLLAVMAY). The Cytoplasmic segment spans residues 121-139 (DRYTAICHPLRYTNLMSPK). A helical membrane pass occupies residues 140-158 (ICGLMTAFSWILGSTDGII). Residues 159–195 (DVVATFSFSYCGSREIAHFFCDFPSLLILSCSDTSIF) lie on the Extracellular side of the membrane. Residues 196-219 (EKILFICCIVMIVFPVAIIIASYA) form a helical membrane-spanning segment. Topologically, residues 220 to 236 (RVILAVIHMGSGEGRRK) are cytoplasmic. Residues 237–259 (AFTTCSSHLLVVGMYYGAALFMY) form a helical membrane-spanning segment. The Extracellular segment spans residues 260–272 (IRPTSDRSPTQDK). A helical membrane pass occupies residues 273 to 292 (MVSVFYTILTPMLNPLIYSL). Residues 293-312 (RNKEVTRAFMKILGKGKSGE) lie on the Cytoplasmic side of the membrane.

It belongs to the G-protein coupled receptor 1 family.

It is found in the cell membrane. Functionally, odorant receptor. The protein is Olfactory receptor 2M3 (OR2M3) of Homo sapiens (Human).